Reading from the N-terminus, the 347-residue chain is Large ribosomal subunit protein uL10 (347 aa).

Residues 310-347 (ATVAAPAAEEEKKEEEPEEEEEDHAEEDGMAGLGALFG) are disordered. Positions 325–338 (EPEEEEEDHAEEDG) are enriched in acidic residues.

The protein belongs to the universal ribosomal protein uL10 family. Part of the 50S ribosomal subunit. Forms part of the ribosomal stalk which helps the ribosome interact with GTP-bound translation factors. Forms a heptameric L10(L12)2(L12)2(L12)2 complex, where L10 forms an elongated spine to which the L12 dimers bind in a sequential fashion.

Functionally, forms part of the ribosomal stalk, playing a central role in the interaction of the ribosome with GTP-bound translation factors. This Methanosarcina mazei (strain ATCC BAA-159 / DSM 3647 / Goe1 / Go1 / JCM 11833 / OCM 88) (Methanosarcina frisia) protein is Large ribosomal subunit protein uL10.